The primary structure comprises 423 residues: Protein phosphatase 2C 77 (423 aa).

A disordered region spans residues 74-95 (GDEINGSDEFDPRSMNQSEKKV). The region spanning 112–411 (LYGVTSICGR…DNISVVVVDL (300 aa)) is the PPM-type phosphatase domain. 3 residues coordinate Mg(2+): Asp165, Asp251, and Ser252. Residues Cys257 and Cys331 are joined by a disulfide bond. 2 residues coordinate Mg(2+): Asp337 and Asp402.

Belongs to the PP2C family. In terms of assembly, interacts with SPK1, CIPK15/PKS3, GPX3, SCAR1, SCAR2, SCAR3 and SCARL. Also interacts with CIPK24/SOS2. Binds to the fibrillin precursor protein. Interacts with ABA-bounded PYR1, PYL1, PYL2, PYL3, PYL4, PYL5, PYL6, PYL8 and PYL9, and with free PYL2, PYL3 and PYL4. Interacts with and represses GHR1, and, to a lesser extent, SRK2E/OST1. Requires Mg(2+) as cofactor. Mn(2+) is required as a cofactor.

It catalyses the reaction O-phospho-L-seryl-[protein] + H2O = L-seryl-[protein] + phosphate. The enzyme catalyses O-phospho-L-threonyl-[protein] + H2O = L-threonyl-[protein] + phosphate. Phosphatase activity repressed by oxidized ATGPX3, free fatty acids (e.g. arachidonic acid (20:4) and Linolenic acid (18:3)) and by H(2)O(2). Repressed by PYR/PYL/RCAR ABA receptors in an ABA-dependent manner. Its function is as follows. Repressor of the abscisic acid (ABA) signaling pathway that regulates numerous ABA responses, such as stomatal closure, osmotic water permeability of the plasma membrane (Pos), high light stress, response to glucose, seed germination and inhibition of vegetative growth. During the stomatal closure regulation, modulates the inward calcium-channel permeability as well as H(2)O(2) and oxidative burst in response to ABA and dehydration. Represses GHR1 and, to some extent, SRK2E/OST1, kinases involved in the regulation of SLAC1-dependent stomatal closure. Controls negatively fibrillin that is involved in mediating ABA-induced photoprotection. May be implicated in ABA content regulation. Involved in acquired thermotolerance of root growth and seedling survival. Required for the Erwinia amylovora harpin-induced (HrpN) drought tolerance. Involved in the hydrotropic response. This chain is Protein phosphatase 2C 77, found in Arabidopsis thaliana (Mouse-ear cress).